Reading from the N-terminus, the 371-residue chain is Liposome tubulation protein MamY (371 aa).

The Cytoplasmic segment spans residues M1–R18. The chain crosses the membrane as a helical span at residues I19–S39. Residues G40 to E51 are Lumenal-facing. The helical transmembrane segment at I52–L72 threads the bilayer. The Cytoplasmic segment spans residues S73–A371.

It belongs to the magnetosome MamY family. Probably interacts with MamX and MamZ proteins.

It localises to the magnetosome membrane. Functionally, may be involved in constriction of the cell inner membrane to form mature magnetosomes. Binds cardiolipin and liposomes. May function with MamX, MamZ amd Mms6 in biomineralization. The chain is Liposome tubulation protein MamY from Magnetospirillum gryphiswaldense (strain DSM 6361 / JCM 21280 / NBRC 15271 / MSR-1).